Consider the following 304-residue polypeptide: Non-specific ribonucleoside hydrolase RihC (304 aa).

His233 is an active-site residue.

It belongs to the IUNH family. RihC subfamily.

Hydrolyzes both purine and pyrimidine ribonucleosides with a broad-substrate specificity. This Escherichia coli O45:K1 (strain S88 / ExPEC) protein is Non-specific ribonucleoside hydrolase RihC.